Consider the following 171-residue polypeptide: Protein-export protein SecB (171 aa).

This sequence belongs to the SecB family. As to quaternary structure, homotetramer, a dimer of dimers. One homotetramer interacts with 1 SecA dimer.

Its subcellular location is the cytoplasm. One of the proteins required for the normal export of preproteins out of the cell cytoplasm. It is a molecular chaperone that binds to a subset of precursor proteins, maintaining them in a translocation-competent state. It also specifically binds to its receptor SecA. This chain is Protein-export protein SecB, found in Xanthomonas oryzae pv. oryzae (strain MAFF 311018).